The sequence spans 131 residues: MAMTDPLGDMLTRIRNGQQAKKDSVLSPASKLRAHVLEVLQREGYIRGFSEDTTGVHPQLRIELKYFEGQPAIKHVARVSKPGRRVYSGSKELPVIRNGLGITIVSTPKGVLSDAEARAANVGGEVLAEVF.

It belongs to the universal ribosomal protein uS8 family. Part of the 30S ribosomal subunit. Contacts proteins S5 and S12.

In terms of biological role, one of the primary rRNA binding proteins, it binds directly to 16S rRNA central domain where it helps coordinate assembly of the platform of the 30S subunit. The chain is Small ribosomal subunit protein uS8 from Novosphingobium aromaticivorans (strain ATCC 700278 / DSM 12444 / CCUG 56034 / CIP 105152 / NBRC 16084 / F199).